The following is a 148-amino-acid chain: Protoporphyrinogen IX oxidase (148 aa).

The next 4 helical transmembrane spans lie at 7–27, 58–78, 86–106, and 128–148; these read YFLWVKAFHVIAVISWMAALF, SFIASPAMGFTLITGILMLLI, GGWLHAKLALVVLLLAYHFYC, and FNEAPTILMILIVILVVVKPF. H15 contacts heme. A heme-binding site is contributed by K92.

This sequence belongs to the HemJ family. As to quaternary structure, homodimer. Heme b serves as cofactor.

Its subcellular location is the cell membrane. It catalyses the reaction protoporphyrinogen IX + 3 A = protoporphyrin IX + 3 AH2. It participates in porphyrin-containing compound metabolism; protoporphyrin-IX biosynthesis; protoporphyrin-IX from protoporphyrinogen-IX: step 1/1. In terms of biological role, catalyzes the oxidation of protoporphyrinogen IX to protoporphyrin IX. Is involved in the biosynthesis of tetrapyrrole molecules like heme. Does not use oxygen or artificial electron acceptors such as menadione or benzoquinone. This chain is Protoporphyrinogen IX oxidase, found in Helicobacter pylori (strain ATCC 700392 / 26695) (Campylobacter pylori).